The following is a 417-amino-acid chain: uncharacterized protein (417 aa).

4 helical membrane passes run 87–107 (LVVAAACTIVEALNLNLGYWI), 130–150 (IAGTVLGVIVGSLVPYFTPSV), 177–197 (FFITIQALTSLSLAGLDVYAA), and 202–222 (IIDTIIGASLAWAAVSYLWPD). A compositionally biased stretch (low complexity) spans 366–398 (APSAPAAAEHKATSSSNSSNSSPGSSNPTTAPT). Positions 366–417 (APSAPAAAEHKATSSSNSSNSSPGSSNPTTAPTDKFRTGSPKTQPEKISAFW) are disordered.

The protein belongs to the YccS/YhfK family.

The protein localises to the cell membrane. This is an uncharacterized protein from Neisseria gonorrhoeae.